The sequence spans 326 residues: GATA zinc finger domain-containing protein 21 (326 aa).

Disordered stretches follow at residues methionine 1–asparagine 102 and glutamine 145–arginine 238. Composition is skewed to low complexity over residues asparagine 17–asparagine 102 and serine 148–alanine 164. Polar residues predominate over residues leucine 165 to glutamine 189. Residues aspartate 193–serine 218 show a composition bias toward acidic residues. The GATA-type zinc finger occupies cysteine 239 to cysteine 266. Residues isoleucine 277–glutamate 326 are disordered. Over residues glutamine 294 to glutamate 326 the composition is skewed to acidic residues.

The polypeptide is GATA zinc finger domain-containing protein 21 (gtaU) (Dictyostelium discoideum (Social amoeba)).